Here is a 986-residue protein sequence, read N- to C-terminus: MSKTRVYELAQQMGIDNKELMARLADAGVSVKNHMAVLEDSDIKALSAPAQTPHKEVSQEEVRVKPTLIRRRAKAVEPEAASAEAASAPAAQEEAPQKAEPEKVEAEKAEAPKPRQAAEPVRARIIEAAPVPKPAAAPAEAAKPEKAKPAEPAPVAAAPKAAEAPAAPAAEAAPAAPAPAEAPVAKPAAKLEASAPAAPAAPAAAAPVEAQAPAKAEEQEPEKATPTRARILGRVEIPIPAQRPAERREYQRTAPGERPAPRPGMPRGVERPGTERPAPRPGGPRPAGAPGRPGERPTTGRPGGPTGGRPDRPAPLAPIDAPPLLGDDRRKGRKPAPAGGTDYAKNGKKGAPAAAGKGKKDSFKDILDKRERVFEPGPRSKGRKGKYEKVQIGKKTEITVPKAIKRIIKISESITVGELAKRMGIKATDLIRALMKLGVMATINHPLDFDTATLLATDFGYEIENVALDVDEILEAEPDTPESLLKRPPVVTIMGHVDHGKTSLLDAIREANVIAGEAGGITQHIGAYDVELNGKKITFLDTPGHEAFTAMRARGAKVTDIVILVVAADDGVMPQTREAVNHSKAAGVPIIVAINKIDKPDASPGKVKQELMEFGLVSEEWGGETIFVEVSAKKRINLESLLEMVLLQADVLELRANPDKPARGTIVEAKLDKGRGPVATVLVQEGTLKSGDYFVAGVHYGRVRAMQNDRGEKVLAAGPAMPVEVIGFNGVPDAGDIFVAMGDEKQAKEIANHRQMKLRESELAKHSKLSLEQLYEKIQKGEVKDLNAIVKGDVQGSVEAVAESLRKLSTDAIRLNVLHASVGAITETDVNLASASNAIILGFNVRPEVKAAALAEKEGVDVRLYNIIYDAVDDIKKAMEGLLEPTFKEKYLGRAEIREVFSVPKAGMVAGSYVTDGKIVRNAQVRLLRDNMVVYEGKLGSLRRFKDDVKEVATGYECGMSLENYNDLKIGDIFECFEMEKVAGKL.

A disordered region spans residues 47-388 (SAPAQTPHKE…RSKGRKGKYE (342 aa)). Basic and acidic residues predominate over residues 53–64 (PHKEVSQEEVRV). A compositionally biased stretch (low complexity) spans 78 to 94 (PEAASAEAASAPAAQEE). Residues 95–113 (APQKAEPEKVEAEKAEAPK) show a composition bias toward basic and acidic residues. 2 stretches are compositionally biased toward low complexity: residues 127 to 141 (EAAP…PAEA) and 153 to 214 (APVA…QAPA). Composition is skewed to basic and acidic residues over residues 215-225 (KAEEQEPEKAT) and 268-278 (GVERPGTERPA). Over residues 286-300 (PAGAPGRPGERPTTG) the composition is skewed to low complexity. A compositionally biased stretch (basic and acidic residues) spans 358 to 374 (GKKDSFKDILDKRERVF). A tr-type G domain is found at 486 to 653 (KRPPVVTIMG…MVLLQADVLE (168 aa)). Residues 495–502 (GHVDHGKT) are G1. 495 to 502 (GHVDHGKT) contacts GTP. A G2 region spans residues 520–524 (GITQH). The tract at residues 541–544 (DTPG) is G3. Residues 541 to 545 (DTPGH) and 595 to 598 (NKID) each bind GTP. The tract at residues 595-598 (NKID) is G4. The tract at residues 631–633 (SAK) is G5.

It belongs to the TRAFAC class translation factor GTPase superfamily. Classic translation factor GTPase family. IF-2 subfamily.

Its subcellular location is the cytoplasm. In terms of biological role, one of the essential components for the initiation of protein synthesis. Protects formylmethionyl-tRNA from spontaneous hydrolysis and promotes its binding to the 30S ribosomal subunits. Also involved in the hydrolysis of GTP during the formation of the 70S ribosomal complex. This is Translation initiation factor IF-2 from Citrifermentans bemidjiense (strain ATCC BAA-1014 / DSM 16622 / JCM 12645 / Bem) (Geobacter bemidjiensis).